The following is a 617-amino-acid chain: MATTINPPRDPNTLSNYNNWLSTHITANFDILFDQKKLVGNVIHKLKSITNAESTDIVLDTSHVDVTDVKVDGKPSVWELLPPVKPYGTALKIKLDQGVKMDEIVHVDISVKTTEKCTALQWLTPAQTSNKKHPYMFSQCQAIHARSIFPCQDTPDVKSTIDFNITSPLPVIASGLLVRDASGAPQTGGKNLYQFHQKVPIPSYLFALASGDISEAAIGPRSVVATSPDKLRECQWELEADTENFINAIEKIVYPYVWGEYNVLILPPSFPYGGMENPIFTFATPSIISKDRENVDVIAHELAHSWSGNLVTNASWEHFWLNEGWTVYLERRILAAVHGEAYRHFSAIIGWKALSDSVDHFGHDHEFTRLITDLKGKDPDDAFSSIPYEKGFNFLFHLENLVGKQKFDQFIPHYFTKFKGKSLDSYEFKATILDFFKSDAEASKLLNELDWDTWFYAPGLPPKPKFDTSLVDVVYDLAKKWQSIPESSFKPQPSDIKDLTGNQIVVFLEQVLLFERPLAPELSKLMGEVYGLAKSANIEVANLYFRVGLNAGDESVFEPTADLLGKIGRMKFVRPLYRNLQKVNRPLAIETFEKNKDFYHPICRAMVEKDLFGKKDA.

A peptide-binding positions include 139–141 and 271–276; these read QCQ and PYGGME. His300 contributes to the Zn(2+) binding site. Glu301 (proton acceptor) is an active-site residue. Zn(2+) contacts are provided by His304 and Glu323. The active-site Proton donor is Tyr388.

It belongs to the peptidase M1 family. Zn(2+) is required as a cofactor.

The protein localises to the cytoplasm. It is found in the nucleus. It carries out the reaction an epoxide + H2O = an ethanediol. Aminopeptidase that preferentially cleaves di- and tripeptides. Also has low epoxide hydrolase activity (in vitro). Can hydrolyze the epoxide leukotriene LTA(4) but it forms preferentially 5,6-dihydroxy-7,9,11,14-eicosatetraenoic acid rather than the cytokine leukotriene B(4) as the product compared to the homologous mammalian enzyme (in vitro). In Aspergillus terreus (strain NIH 2624 / FGSC A1156), this protein is Leucine aminopeptidase 2.